The following is a 139-amino-acid chain: Small ribosomal subunit protein uS12 (139 aa).

Positions 1–55 are disordered; it reads MPTINQLIRKGRKAKVKKSDSPALNKGYNSFKKVQTDLSSPQKRGVCTRVGTMTP. The segment covering 32 to 42 has biased composition (polar residues); that stretch reads KKVQTDLSSPQ.

Belongs to the universal ribosomal protein uS12 family. In terms of assembly, part of the 30S ribosomal subunit. Contacts proteins S8 and S17. May interact with IF1 in the 30S initiation complex.

Its function is as follows. With S4 and S5 plays an important role in translational accuracy. Functionally, interacts with and stabilizes bases of the 16S rRNA that are involved in tRNA selection in the A site and with the mRNA backbone. Located at the interface of the 30S and 50S subunits, it traverses the body of the 30S subunit contacting proteins on the other side and probably holding the rRNA structure together. The combined cluster of proteins S8, S12 and S17 appears to hold together the shoulder and platform of the 30S subunit. In Halalkalibacterium halodurans (strain ATCC BAA-125 / DSM 18197 / FERM 7344 / JCM 9153 / C-125) (Bacillus halodurans), this protein is Small ribosomal subunit protein uS12.